The following is a 275-amino-acid chain: Large ribosomal subunit protein uL2 (275 aa).

2 disordered regions span residues 28-48 (KPYA…NNGR) and 223-275 (VVMN…RNKK).

It belongs to the universal ribosomal protein uL2 family. In terms of assembly, part of the 50S ribosomal subunit. Forms a bridge to the 30S subunit in the 70S ribosome.

Functionally, one of the primary rRNA binding proteins. Required for association of the 30S and 50S subunits to form the 70S ribosome, for tRNA binding and peptide bond formation. It has been suggested to have peptidyltransferase activity; this is somewhat controversial. Makes several contacts with the 16S rRNA in the 70S ribosome. The polypeptide is Large ribosomal subunit protein uL2 (Photobacterium profundum (strain SS9)).